The following is a 344-amino-acid chain: Uroporphyrinogen decarboxylase (344 aa).

Residues 23–27 (RQAGR), Asp-73, Tyr-149, Thr-204, and His-321 contribute to the substrate site.

This sequence belongs to the uroporphyrinogen decarboxylase family. As to quaternary structure, homodimer.

The protein resides in the cytoplasm. It carries out the reaction uroporphyrinogen III + 4 H(+) = coproporphyrinogen III + 4 CO2. Its pathway is porphyrin-containing compound metabolism; protoporphyrin-IX biosynthesis; coproporphyrinogen-III from 5-aminolevulinate: step 4/4. Catalyzes the decarboxylation of four acetate groups of uroporphyrinogen-III to yield coproporphyrinogen-III. In Francisella tularensis subsp. novicida (strain U112), this protein is Uroporphyrinogen decarboxylase.